We begin with the raw amino-acid sequence, 187 residues long: Ribosome maturation factor RimM (187 aa).

Residues 91 to 183 (DDGFYDHELE…ILVLTPPEGL (93 aa)) form the PRC barrel domain.

This sequence belongs to the RimM family. Binds ribosomal protein uS19.

It localises to the cytoplasm. Its function is as follows. An accessory protein needed during the final step in the assembly of 30S ribosomal subunit, possibly for assembly of the head region. Essential for efficient processing of 16S rRNA. May be needed both before and after RbfA during the maturation of 16S rRNA. It has affinity for free ribosomal 30S subunits but not for 70S ribosomes. The protein is Ribosome maturation factor RimM of Corynebacterium jeikeium (strain K411).